Reading from the N-terminus, the 425-residue chain is MNNIVIVGLQWGDEGKGKIVDYLSENADVVVRFQGGNNAGHTIVVDDEVYKLNLLPSAVLRPGKISIIGNGVALDSHALISEIESLKVKGVDVNYNNLMVSESCPLILSVHKDKEKLFEDLNGNHKIGTTNKGIGPCYEDKVGRRAIRLCDLENADELNKRLDTLLNYHNAIRKGLNYQVVKKEEILKEIQEISEKILSYKKPVWKILNDLMKEGKKIIFEGAQGAFLDIDHGTYPFVTSSNTVASQAITGSGLSSNAYIIGVVKAYTTRVGNGPFPTEQKNEVGDSLFTIGKELGTVSNRRRRCGWFDAVLVRQAVQLSGVSSIVLTKLDVLNSFDTIKICTGYKYSGKMYDYLPASHSIQGELEPIYEEFPGWKENTQGKRSIETLPINLIKYIEGLEKLIGVPIHLISTSPKREDVIKLKDF.

Residues 12–18 and 40–42 each bind GTP; these read GDEGKGK and GHT. The Proton acceptor role is filled by D13. Mg(2+)-binding residues include D13 and G40. IMP contacts are provided by residues 13 to 16, 38 to 41, T130, R144, Q224, T239, and R301; these read DEGK and NAGH. H41 serves as the catalytic Proton donor. 297–303 serves as a coordination point for substrate; it reads TVSNRRR. GTP-binding positions include R303, 329–331, and 411–413; these read KLD and STS.

It belongs to the adenylosuccinate synthetase family. In terms of assembly, homodimer. It depends on Mg(2+) as a cofactor.

Its subcellular location is the cytoplasm. The enzyme catalyses IMP + L-aspartate + GTP = N(6)-(1,2-dicarboxyethyl)-AMP + GDP + phosphate + 2 H(+). It functions in the pathway purine metabolism; AMP biosynthesis via de novo pathway; AMP from IMP: step 1/2. Its function is as follows. Plays an important role in the de novo pathway of purine nucleotide biosynthesis. Catalyzes the first committed step in the biosynthesis of AMP from IMP. The polypeptide is Adenylosuccinate synthetase (Wolbachia sp. subsp. Drosophila simulans (strain wRi)).